Consider the following 441-residue polypeptide: Ribosomal protein uS12 methylthiotransferase RimO (441 aa).

Residues 8-118 enclose the MTTase N-terminal domain; sequence PKIGFVSLGC…VLEHVHHYVP (111 aa). Cys17, Cys53, Cys82, Cys150, Cys154, and Cys157 together coordinate [4Fe-4S] cluster. The 238-residue stretch at 136–373 folds into the Radical SAM core domain; it reads LTPRHYAYLK…MQLQQQISAE (238 aa). In terms of domain architecture, TRAM spans 376-441; that stretch reads QEKVGREILV…DEYDLWGSRV (66 aa).

The protein belongs to the methylthiotransferase family. RimO subfamily. It depends on [4Fe-4S] cluster as a cofactor.

It is found in the cytoplasm. The catalysed reaction is L-aspartate(89)-[ribosomal protein uS12]-hydrogen + (sulfur carrier)-SH + AH2 + 2 S-adenosyl-L-methionine = 3-methylsulfanyl-L-aspartate(89)-[ribosomal protein uS12]-hydrogen + (sulfur carrier)-H + 5'-deoxyadenosine + L-methionine + A + S-adenosyl-L-homocysteine + 2 H(+). In terms of biological role, catalyzes the methylthiolation of an aspartic acid residue of ribosomal protein uS12. The protein is Ribosomal protein uS12 methylthiotransferase RimO of Shigella boydii serotype 18 (strain CDC 3083-94 / BS512).